We begin with the raw amino-acid sequence, 502 residues long: Glycerol kinase (502 aa).

ADP is bound at residue T14. ATP-binding residues include T14, T15, and S16. T14 contributes to the sn-glycerol 3-phosphate binding site. R18 is an ADP binding site. Positions 84, 85, 136, and 246 each coordinate sn-glycerol 3-phosphate. Glycerol contacts are provided by R84, E85, Y136, D246, and Q247. ADP contacts are provided by T268 and G311. ATP is bound by residues T268, G311, Q315, and G412. ADP contacts are provided by G412 and N416.

The protein belongs to the FGGY kinase family. Homotetramer and homodimer (in equilibrium). Heterodimer with EIIA-Glc. Binds 1 zinc ion per glycerol kinase EIIA-Glc dimer. The zinc ion is important for dimerization.

The catalysed reaction is glycerol + ATP = sn-glycerol 3-phosphate + ADP + H(+). The protein operates within polyol metabolism; glycerol degradation via glycerol kinase pathway; sn-glycerol 3-phosphate from glycerol: step 1/1. Activity of this regulatory enzyme is affected by several metabolites. Allosterically and non-competitively inhibited by fructose 1,6-bisphosphate (FBP) and unphosphorylated phosphocarrier protein EIIA-Glc (III-Glc), an integral component of the bacterial phosphotransferase (PTS) system. Its function is as follows. Key enzyme in the regulation of glycerol uptake and metabolism. Catalyzes the phosphorylation of glycerol to yield sn-glycerol 3-phosphate. The protein is Glycerol kinase of Escherichia coli O81 (strain ED1a).